Here is a 403-residue protein sequence, read N- to C-terminus: Phosphoglycerate kinase (403 aa).

Substrate-binding positions include 22 to 24 (DLN), Arg-37, 60 to 63 (HLGR), Arg-119, and Arg-156. Residues Lys-206, Gly-302, Glu-333, and 359–362 (GGDS) contribute to the ATP site.

It belongs to the phosphoglycerate kinase family. In terms of assembly, monomer.

It localises to the cytoplasm. It carries out the reaction (2R)-3-phosphoglycerate + ATP = (2R)-3-phospho-glyceroyl phosphate + ADP. It participates in carbohydrate degradation; glycolysis; pyruvate from D-glyceraldehyde 3-phosphate: step 2/5. This is Phosphoglycerate kinase from Streptomyces griseus subsp. griseus (strain JCM 4626 / CBS 651.72 / NBRC 13350 / KCC S-0626 / ISP 5235).